The following is a 340-amino-acid chain: Phosphate acyltransferase (340 aa).

The protein belongs to the PlsX family. In terms of assembly, homodimer. Probably interacts with PlsY.

It localises to the cytoplasm. It catalyses the reaction a fatty acyl-[ACP] + phosphate = an acyl phosphate + holo-[ACP]. It participates in lipid metabolism; phospholipid metabolism. Its function is as follows. Catalyzes the reversible formation of acyl-phosphate (acyl-PO(4)) from acyl-[acyl-carrier-protein] (acyl-ACP). This enzyme utilizes acyl-ACP as fatty acyl donor, but not acyl-CoA. The chain is Phosphate acyltransferase from Leptospira biflexa serovar Patoc (strain Patoc 1 / ATCC 23582 / Paris).